The primary structure comprises 320 residues: MLTRSWKIILSTVFISTFLLVGLLNHQWLKETEFPQKPRQLYTVIAEYGSRLYNYQARLRMPKEQQELLKKESQTLENNFREILFLIEQIDVLKALLKDMKDGVHNHSLPVHRDAVQDQATTDVLDEEMSNLVHYVLKKFRGDQIQLADYALKSAGASVIEAGTSESYKNNKAKLYWHGIGFLNYEMPPDMILQPDVHPGKCWAFPGSQGHILIKLARKIIPTAVTMEHISEKVSPSGNISSAPKEFSVYGVMKKCEGEEIFLGQFIYNKMEATIQTFELQNEASESLLCVKLQILSNWGHPKYTCLYRFRVHGIPSDYT.

Residues 1-6 (MLTRSW) are Nuclear-facing. A helical transmembrane segment spans residues 7–29 (KIILSTVFISTFLLVGLLNHQWL). Residues 30–320 (KETEFPQKPR…RVHGIPSDYT (291 aa)) lie on the Perinuclear space side of the membrane. The stretch at 63–102 (KEQQELLKKESQTLENNFREILFLIEQIDVLKALLKDMKD) forms a coiled coil. The SUN domain maps to 156-317 (GASVIEAGTS…YRFRVHGIPS (162 aa)).

Self-associates. Interacts with SYNE1 and SPAG4/SUN4. Proposed to form a spermatogenesis-specific LINC complex with SYNE1 during sperm head formation possibly implicating a SUN domain-based heterotrimer with SPAG4/SUN4 associating with SYNE1. Can interact with SYNE3; the interaction is questioned by missing colocalization in spermatids. As to expression, specifically expressed in testis (at protein level).

The protein resides in the membrane. The protein localises to the nucleus envelope. It localises to the nucleus inner membrane. As a probable component of the LINC (LInker of Nucleoskeleton and Cytoskeleton) complex, involved in the connection between the nuclear lamina and the cytoskeleton. The nucleocytoplasmic interactions established by the LINC complex play an important role in the transmission of mechanical forces across the nuclear envelope and in nuclear movement and positioning. May be involved in nuclear remodeling during sperm head formation in spermatogenesis. A probable SUN3:SYNE1 LINC complex may tether spermatid nuclei to posterior cytoskeletal structures such as the manchette. The sequence is that of SUN domain-containing protein 3 (Sun3) from Mus musculus (Mouse).